Here is a 395-residue protein sequence, read N- to C-terminus: Non-homologous end joining protein Ku (395 aa).

The region spanning 9–181 (ISFGLVSIPI…PPEDAAPDGD (173 aa)) is the Ku domain. Positions 252–395 (RAARTSRDDE…SASSRKRTSA (144 aa)) are disordered. Composition is skewed to polar residues over residues 283–292 (SSKTSGQSSG) and 311–320 (GKTVTRSGDS). A compositionally biased stretch (basic residues) spans 351-361 (TARKTTAKKTT). Residues 362 to 371 (AKGTTGTTAA) show a composition bias toward low complexity.

It belongs to the prokaryotic Ku family. As to quaternary structure, homodimer. Interacts with LigD.

Its function is as follows. With LigD forms a non-homologous end joining (NHEJ) DNA repair enzyme, which repairs dsDNA breaks with reduced fidelity. Binds linear dsDNA with 5'- and 3'- overhangs but not closed circular dsDNA nor ssDNA. Recruits and stimulates the ligase activity of LigD. This Streptomyces griseus subsp. griseus (strain JCM 4626 / CBS 651.72 / NBRC 13350 / KCC S-0626 / ISP 5235) protein is Non-homologous end joining protein Ku.